The following is a 357-amino-acid chain: Dehydrogenase FUB6 (357 aa).

Residues 1–17 (MGGEVSNKTWVFKQSPS) are compositionally biased toward polar residues. Residues 1 to 22 (MGGEVSNKTWVFKQSPSGLPEP) are disordered.

The protein belongs to the zinc-containing alcohol dehydrogenase family. Quinone oxidoreductase subfamily.

It participates in mycotoxin biosynthesis. Functionally, dehydrogenase; part of the gene cluster that mediates the biosynthesis of fusaric acid, a mycotoxin with low to moderate toxicity to animals and humans, but with high phytotoxic properties. L-aspartate is suggested as fusaric acid amino acid precursor that is activated and further processed to O-acetyl-L-homoserine by cluster enzymes aspartate kinase FUB3 and homoserine O-acetyltransferase FUB5, as well as enzymes of the primary metabolism. The polyketide synthase (PKS) FUB1 generates the triketide trans-2-hexenal which is presumptively released by the hydrolase FUB4 and linked to the NRPS-bound amino acid precursor by NAD(P)-dependent dehydrogenase FUB6. FUB1, FUB4, and the non-canonical NRPS Fub8 may form an enzyme complex. Further processing of the NRPS-bound intermediate might be carried out by FUB6 and the O-acetylhomoserine FUB7, enabling a spontaneous electrocyclization to close the carbon backbone of fusaric acid. Dihydrofusaric acid is likely to be released via reduction by the thioester reductase (TR) domain of FUB8 whereupon the final oxidation to fusaric acid may (also) be performed by the FMN-dependent dehydrogenase FUB9. This Fusarium oxysporum f. sp. lycopersici (strain 4287 / CBS 123668 / FGSC 9935 / NRRL 34936) (Fusarium vascular wilt of tomato) protein is Dehydrogenase FUB6.